The primary structure comprises 509 residues: Maturase K (509 aa).

Belongs to the intron maturase 2 family. MatK subfamily.

It is found in the plastid. The protein resides in the chloroplast. In terms of biological role, usually encoded in the trnK tRNA gene intron. Probably assists in splicing its own and other chloroplast group II introns. This is Maturase K from Drimys granadensis.